We begin with the raw amino-acid sequence, 311 residues long: Putative mitochondrial transporter UCP3 (311 aa).

At Met-1–Pro-10 the chain is on the mitochondrial intermembrane side. Residues Pro-11–Phe-32 form a helical membrane-spanning segment. 3 Solcar repeats span residues Pro-11–Phe-105, Ser-114–Lys-205, and Asp-214–Ala-299. The Mitochondrial matrix segment spans residues Pro-33–Ser-76. A helical membrane pass occupies residues Pro-77–Tyr-99. Topologically, residues Asp-100 to Arg-119 are mitochondrial intermembrane. The helical transmembrane segment at Ile-120–Pro-136 threads the bilayer. Topologically, residues Thr-137–Leu-182 are mitochondrial matrix. A helical transmembrane segment spans residues Pro-183–Tyr-199. Residues Asp-200 to Phe-216 are Mitochondrial intermembrane-facing. Residues Pro-217–Pro-236 traverse the membrane as a helical segment. Residues Val-237 to Ala-270 lie on the Mitochondrial matrix side of the membrane. The helical transmembrane segment at Phe-271–Tyr-293 threads the bilayer. The purine nucleotide binding stretch occupies residues Ser-278 to Leu-300. At Glu-294–Phe-311 the chain is on the mitochondrial intermembrane side.

This sequence belongs to the mitochondrial carrier (TC 2.A.29) family. As to quaternary structure, interacts with HAX1; the interaction is direct and calcium-dependent.

The protein resides in the mitochondrion inner membrane. Putative transmembrane transporter that plays a role in mitochondrial metabolism via an as yet unclear mechanism. Originally, this mitochondrial protein was thought to act as a proton transmembrane transporter from the mitochondrial intermembrane space into the matrix, causing proton leaks through the inner mitochondrial membrane, thereby uncoupling mitochondrial membrane potential generation from ATP synthesis. However, this function is controversial and uncoupling may not be the function, or at least not the main function, but rather a consequence of more conventional metabolite transporter activity. This Canis lupus familiaris (Dog) protein is Putative mitochondrial transporter UCP3.